A 519-amino-acid polypeptide reads, in one-letter code: Serine/threonine-protein kinase RIO1 (519 aa).

The segment covering 1–10 has biased composition (pro residues); it reads MTPAPEPQDP. A disordered region spans residues 1–54; sequence MTPAPEPQDPPTIHEPVATEQTDDISDWDVESDYEDGYGAPSKSQAQGGASAAD. The span at 21 to 36 shows a compositional bias: acidic residues; that stretch reads QTDDISDWDVESDYED. Residues 39-53 show a composition bias toward low complexity; it reads GAPSKSQAQGGASAA. Positions 122–519 constitute a Protein kinase domain; it reads SEIYGTISTG…KLVAANKKRK (398 aa). ATP is bound by residues lysine 154 and leucine 228. Aspartate 281 serves as the catalytic Proton acceptor. Residues asparagine 286 and aspartate 298 each coordinate Mg(2+). The 4-aspartylphosphate intermediate role is filled by aspartate 298. The tract at residues 418 to 519 is disordered; the sequence is ADSKVPESTG…KLVAANKKRK (102 aa). A compositionally biased stretch (acidic residues) spans 439–464; the sequence is GSEDEEGDEGESGEVESGDEEREEGE. The tract at residues 440-519 is association with (pre-)40S ribosomal particle; sequence SEDEEGDEGE…KLVAANKKRK (80 aa). Composition is skewed to basic residues over residues 470-489 and 497-519; these read KKRP…AHKM and EKRK…KKRK.

This sequence belongs to the protein kinase superfamily. RIO-type Ser/Thr kinase family. The cofactor is Mg(2+). In terms of processing, autophosphorylated.

Its subcellular location is the cytoplasm. It catalyses the reaction L-seryl-[protein] + ATP = O-phospho-L-seryl-[protein] + ADP + H(+). The catalysed reaction is L-threonyl-[protein] + ATP = O-phospho-L-threonyl-[protein] + ADP + H(+). It carries out the reaction ATP + H2O = ADP + phosphate + H(+). In terms of biological role, involved in the final steps of cytoplasmic maturation of the 40S ribosomal subunit. In vitro, has strong ATPase activity and only low protein kinase activity. The protein is Serine/threonine-protein kinase RIO1 of Chaetomium thermophilum (strain DSM 1495 / CBS 144.50 / IMI 039719) (Thermochaetoides thermophila).